The primary structure comprises 379 residues: F420-dependent formate dehydrogenase subunit beta (379 aa).

4Fe-4S ferredoxin-type domains are found at residues 271-301 (EKWK…CSLE) and 321-351 (IRLS…YIFH). 8 residues coordinate [4Fe-4S] cluster: cysteine 280, cysteine 283, cysteine 286, cysteine 290, cysteine 330, cysteine 333, cysteine 336, and cysteine 340.

Belongs to the FrhB family. Dimer of an alpha (FdhA) and a beta (FdhB) subunit. [4Fe-4S] cluster serves as cofactor. It depends on FAD as a cofactor. Requires Zn(2+) as cofactor.

It catalyses the reaction oxidized coenzyme F420-(gamma-L-Glu)(n) + formate + 2 H(+) = reduced coenzyme F420-(gamma-L-Glu)(n) + CO2. Its function is as follows. Catalyzes the oxidation of formate to carbon dioxide, with coenzyme F420 as the electron acceptor. The polypeptide is F420-dependent formate dehydrogenase subunit beta (fdhB) (Methanocaldococcus jannaschii (strain ATCC 43067 / DSM 2661 / JAL-1 / JCM 10045 / NBRC 100440) (Methanococcus jannaschii)).